The sequence spans 445 residues: Proline--tRNA ligase (445 aa).

This sequence belongs to the class-II aminoacyl-tRNA synthetase family. ProS type 2 subfamily. Homodimer.

The protein resides in the cytoplasm. It catalyses the reaction tRNA(Pro) + L-proline + ATP = L-prolyl-tRNA(Pro) + AMP + diphosphate. Functionally, catalyzes the attachment of proline to tRNA(Pro) in a two-step reaction: proline is first activated by ATP to form Pro-AMP and then transferred to the acceptor end of tRNA(Pro). The protein is Proline--tRNA ligase of Caulobacter sp. (strain K31).